The following is a 134-amino-acid chain: Early E3B 14.5 kDa protein (134 aa).

The signal sequence occupies residues 1–21 (MQAMLPVILILLLPCIPLAST). Residues 54–78 (YWIVIVGIINILSCTFFSITIYPTF) form a helical membrane-spanning segment.

This sequence belongs to the adenoviridae E3_14 family. Post-translationally, phosphorylated on serine; O-glycosylated, but not N-glycosylated.

Its subcellular location is the host membrane. Down-regulates the EGF receptor and prevents cytolysis by TNF. This is Early E3B 14.5 kDa protein from Homo sapiens (Human).